Reading from the N-terminus, the 101-residue chain is Thylakoid-associated protein slr0729 (101 aa).

The protein resides in the cellular thylakoid membrane. The protein is Thylakoid-associated protein slr0729 of Synechocystis sp. (strain ATCC 27184 / PCC 6803 / Kazusa).